The sequence spans 344 residues: L-rhamnose-proton symporter (344 aa).

The next 10 helical transmembrane spans lie at Ile-5–Pro-25, Trp-38–Leu-58, Ile-72–Leu-92, Met-101–Ile-121, Thr-137–Leu-157, Leu-175–Ala-195, Leu-214–Ile-234, Ile-259–Gly-279, Phe-289–Leu-309, and Val-323–Ala-343.

The protein belongs to the L-rhamnose transporter (TC 2.A.7.6) family.

It localises to the cell inner membrane. It catalyses the reaction L-rhamnopyranose(in) + H(+)(in) = L-rhamnopyranose(out) + H(+)(out). In terms of biological role, uptake of L-rhamnose across the cytoplasmic membrane with the concomitant transport of protons into the cell (symport system). The polypeptide is L-rhamnose-proton symporter (Mannheimia succiniciproducens (strain KCTC 0769BP / MBEL55E)).